We begin with the raw amino-acid sequence, 220 residues long: dITP/XTP pyrophosphatase (220 aa).

Residue 13 to 18 coordinates substrate; it reads SHNAGK. Residues D45 and D74 each coordinate Mg(2+). D74 serves as the catalytic Proton acceptor. Substrate contacts are provided by residues S75, 163–166, K186, and 199–200; these read FGYD and HR.

It belongs to the HAM1 NTPase family. Homodimer. Mg(2+) is required as a cofactor.

It catalyses the reaction XTP + H2O = XMP + diphosphate + H(+). It carries out the reaction dITP + H2O = dIMP + diphosphate + H(+). The catalysed reaction is ITP + H2O = IMP + diphosphate + H(+). Functionally, pyrophosphatase that catalyzes the hydrolysis of nucleoside triphosphates to their monophosphate derivatives, with a high preference for the non-canonical purine nucleotides XTP (xanthosine triphosphate), dITP (deoxyinosine triphosphate) and ITP. Seems to function as a house-cleaning enzyme that removes non-canonical purine nucleotides from the nucleotide pool, thus preventing their incorporation into DNA/RNA and avoiding chromosomal lesions. The chain is dITP/XTP pyrophosphatase from Mesorhizobium japonicum (strain LMG 29417 / CECT 9101 / MAFF 303099) (Mesorhizobium loti (strain MAFF 303099)).